Reading from the N-terminus, the 351-residue chain is 1-aminocyclopropane-1-carboxylate oxidase homolog 4 (351 aa).

Residues 200-304 (KSQYMVGQHY…AIVFSTFMRA (105 aa)) form the Fe2OG dioxygenase domain. 3 residues coordinate Fe cation: His-224, Asp-226, and His-280. Arg-291 contacts 2-oxoglutarate.

Belongs to the iron/ascorbate-dependent oxidoreductase family. Fe(2+) serves as cofactor.

The polypeptide is 1-aminocyclopropane-1-carboxylate oxidase homolog 4 (Arabidopsis thaliana (Mouse-ear cress)).